The following is a 653-amino-acid chain: Fusexin 1 (653 aa).

The first 23 residues, 1-23 (MKNGLKASVVALFFLLAASSASA), serve as a signal peptide directing secretion. At 24-559 (ATNSVDTVTY…MEKALSGNAG (536 aa)) the chain is on the extracellular side. 4 cysteine pairs are disulfide-bonded: Cys-126–Cys-166, Cys-397–Cys-440, Cys-467–Cys-490, and Cys-502–Cys-519. Positions 154–159 (DTWTGQ) are fusion loop. Residues 560-580 (ALTWAQLLLSFIGFLAGFALV) traverse the membrane as a helical segment. At 581–600 (GVKLGKMVDGLATEFIPLSD) the chain is on the cytoplasmic side. 2 helical membrane passes run 601–621 (AVVR…AVYQ) and 622–642 (LVTN…TGYL). Topologically, residues 643 to 653 (YLKGTTPDINL) are cytoplasmic.

The protein belongs to the HAP2/GCS1 family. Fusexin 1 subfamily. Homotrimer stabilized by interdomain contacts and numerous Ca(2+) and Na(+) ions.

The protein localises to the cell surface. It localises to the cell membrane. Functionally, exhibits fusogenic activity. Mediates cell-cell fusion in mammalian cells (bilateral fusion). The polypeptide is Fusexin 1 (Haloferax sp. (strain Q22)).